The primary structure comprises 165 residues: uncharacterized protein (165 aa).

The Cupin type-1 domain occupies 28–139 (QNALKDTGLA…KPNEREEAVK (112 aa)).

This is an uncharacterized protein from Bacillus subtilis (strain 168).